Consider the following 63-residue polypeptide: Large ribosomal subunit protein bL28 (63 aa).

The protein belongs to the bacterial ribosomal protein bL28 family.

This chain is Large ribosomal subunit protein bL28, found in Clostridium kluyveri (strain NBRC 12016).